Here is an 87-residue protein sequence, read N- to C-terminus: Lipid-anchored plasma membrane protein uvi15 (87 aa).

The segment at 1–64 (MSAQQFYGDK…MYVQQPQASD (64 aa)) is disordered. The span at 18-41 (QQAYGGPNYYPPQQNYPQQGYAPP) shows a compositional bias: low complexity.

Belongs to the CYSTM1 family. Palmitoylated.

It localises to the cell membrane. Its subcellular location is the cell tip. Its function is as follows. Required for the maintenance of viability of cells in stationary phase and in starvation conditions. In Schizosaccharomyces pombe (strain 972 / ATCC 24843) (Fission yeast), this protein is Lipid-anchored plasma membrane protein uvi15 (uvi15).